The primary structure comprises 261 residues: Adenosylcobinamide-GDP ribazoletransferase (261 aa).

The next 5 membrane-spanning stretches (helical) occupy residues 12 to 32 (NLFF…WVVI), 46 to 66 (LVGL…QLIL), 67 to 87 (PASI…GAFH), 120 to 140 (GALS…ELAL), and 199 to 219 (IFVL…TLWL).

It belongs to the CobS family. Mg(2+) is required as a cofactor.

The protein localises to the cell inner membrane. It catalyses the reaction alpha-ribazole + adenosylcob(III)inamide-GDP = adenosylcob(III)alamin + GMP + H(+). The enzyme catalyses alpha-ribazole 5'-phosphate + adenosylcob(III)inamide-GDP = adenosylcob(III)alamin 5'-phosphate + GMP + H(+). Its pathway is cofactor biosynthesis; adenosylcobalamin biosynthesis; adenosylcobalamin from cob(II)yrinate a,c-diamide: step 7/7. In terms of biological role, joins adenosylcobinamide-GDP and alpha-ribazole to generate adenosylcobalamin (Ado-cobalamin). Also synthesizes adenosylcobalamin 5'-phosphate from adenosylcobinamide-GDP and alpha-ribazole 5'-phosphate. The polypeptide is Adenosylcobinamide-GDP ribazoletransferase (Shewanella frigidimarina (strain NCIMB 400)).